The primary structure comprises 514 residues: Arabinose import ATP-binding protein AraG (514 aa).

ABC transporter domains are found at residues 16–251 (LRFN…MVGR) and 251–507 (RDIQ…LPRH). Residue 48–55 (GENGAGKS) coordinates ATP.

This sequence belongs to the ABC transporter superfamily. Arabinose importer (TC 3.A.1.2.2) family. The complex is composed of two ATP-binding proteins (AraG), two transmembrane proteins (AraH) and a solute-binding protein (AraF).

The protein localises to the cell inner membrane. The enzyme catalyses L-arabinose(out) + ATP + H2O = L-arabinose(in) + ADP + phosphate + H(+). Part of the ABC transporter complex AraFGH involved in arabinose import. Responsible for energy coupling to the transport system. This Pseudomonas fluorescens (strain Pf0-1) protein is Arabinose import ATP-binding protein AraG.